A 289-amino-acid chain; its full sequence is MVDIIIAEHAGFCFGVKRAVKLAEESLKESQGKVYTLGPIIHNPQEVNRLKNLGVFPSQGEEFKEGDTVIIRSHGIPPEKEEALRKKGLKVIDATCPYVKAVHEAVCQLTREGYFVVLVGEKNHPEVIGTLGYLRACNGKGIVVETLEDIGEALKHERVGIVAQTTQNEEFFKEVVGEIALWVKEVKVINTICNATSLRQESVKKLAPEVDVMIIIGGKNSGNTRRLYYISKELNPNTYHIETAEELQPEWFRGVKRVGISAGASTPDWIIEQVKSRIQEICEGQLVSS.

Cys-13 contacts [4Fe-4S] cluster. The (2E)-4-hydroxy-3-methylbut-2-enyl diphosphate site is built by His-42 and His-74. Dimethylallyl diphosphate contacts are provided by His-42 and His-74. Isopentenyl diphosphate contacts are provided by His-42 and His-74. Residue Cys-96 participates in [4Fe-4S] cluster binding. (2E)-4-hydroxy-3-methylbut-2-enyl diphosphate is bound at residue His-124. His-124 provides a ligand contact to dimethylallyl diphosphate. Position 124 (His-124) interacts with isopentenyl diphosphate. Glu-126 acts as the Proton donor in catalysis. Residue Thr-165 participates in (2E)-4-hydroxy-3-methylbut-2-enyl diphosphate binding. Cys-193 is a [4Fe-4S] cluster binding site. (2E)-4-hydroxy-3-methylbut-2-enyl diphosphate contacts are provided by Ser-221, Asn-223, and Ser-265. 3 residues coordinate dimethylallyl diphosphate: Ser-221, Asn-223, and Ser-265. Residues Ser-221, Asn-223, and Ser-265 each coordinate isopentenyl diphosphate.

This sequence belongs to the IspH family. It depends on [4Fe-4S] cluster as a cofactor.

It catalyses the reaction isopentenyl diphosphate + 2 oxidized [2Fe-2S]-[ferredoxin] + H2O = (2E)-4-hydroxy-3-methylbut-2-enyl diphosphate + 2 reduced [2Fe-2S]-[ferredoxin] + 2 H(+). It carries out the reaction dimethylallyl diphosphate + 2 oxidized [2Fe-2S]-[ferredoxin] + H2O = (2E)-4-hydroxy-3-methylbut-2-enyl diphosphate + 2 reduced [2Fe-2S]-[ferredoxin] + 2 H(+). It functions in the pathway isoprenoid biosynthesis; dimethylallyl diphosphate biosynthesis; dimethylallyl diphosphate from (2E)-4-hydroxy-3-methylbutenyl diphosphate: step 1/1. The protein operates within isoprenoid biosynthesis; isopentenyl diphosphate biosynthesis via DXP pathway; isopentenyl diphosphate from 1-deoxy-D-xylulose 5-phosphate: step 6/6. With respect to regulation, highly sensitive to dioxygen. In terms of biological role, catalyzes the conversion of 1-hydroxy-2-methyl-2-(E)-butenyl 4-diphosphate (HMBPP) into a mixture of isopentenyl diphosphate (IPP) and dimethylallyl diphosphate (DMAPP). Acts in the terminal step of the DOXP/MEP pathway for isoprenoid precursor biosynthesis. The polypeptide is 4-hydroxy-3-methylbut-2-enyl diphosphate reductase (Aquifex aeolicus (strain VF5)).